A 253-amino-acid polypeptide reads, in one-letter code: Dehydration-responsive element-binding protein 1D (253 aa).

A compositionally biased stretch (polar residues) spans 1–22; sequence MEKNTAASGQLMTSSAEATPSS. The tract at residues 1–31 is disordered; sequence MEKNTAASGQLMTSSAEATPSSPKRPAGRTK. A DNA-binding region (AP2/ERF) is located at residues 39–98; it reads VFRGVRWRGCAGRWVCKVRVPGSRGDRFWIGTSDTAEETARTHDAAMLALCGASASLNFA. The tract at residues 131 to 153 is disordered; that stretch reads RRVPAPGRGSTATATATSGDAAS. The segment covering 134–153 has biased composition (low complexity); it reads PAPGRGSTATATATSGDAAS.

It belongs to the AP2/ERF transcription factor family. ERF subfamily.

Its subcellular location is the nucleus. Transcriptional activator that binds specifically to the DNA sequence 5'-[AG]CCGAC-3'. Binding to the C-repeat/DRE element mediates high salinity- and dehydration-inducible transcription. This is Dehydration-responsive element-binding protein 1D (DREB1D) from Oryza sativa subsp. indica (Rice).